The primary structure comprises 278 residues: Heat stress transcription factor C-2b (278 aa).

The span at 105–114 (AAGGGGGGGG) shows a compositional bias: gly residues. The segment at 105–132 (AAGGGGGGGGGKRRDASADGGGGGGDED) is disordered. Residues 143-179 (LKQEQRTIDDRVAAMWRRVQETERRPKQMLAFLLKVV) are hydrophobic repeat HR-A/B. The Nuclear localization signal signature appears at 219–222 (KRAR).

It belongs to the HSF family. Class C subfamily. As to quaternary structure, homotrimer. Exhibits temperature-dependent phosphorylation.

The protein resides in the nucleus. Functionally, transcriptional regulator that specifically binds DNA of heat shock promoter elements (HSE). The sequence is that of Heat stress transcription factor C-2b (HSFC2B) from Oryza sativa subsp. japonica (Rice).